Consider the following 2504-residue polypeptide: Fatty acid synthase (2504 aa).

Residue Met-1 is modified to N-acetylmethionine. The Ketosynthase family 3 (KS3) domain maps to 1 to 406 (MEEVVIAGMS…GSNVHVILQP (406 aa)). Lys-59 bears the N6-acetyllysine mark. Ser-63 carries the phosphoserine modification. N6-acetyllysine is present on Lys-70. The active-site For beta-ketoacyl synthase activity is Cys-161. Ser-207 bears the Phosphoserine mark. The active-site For beta-ketoacyl synthase activity is His-293. At Lys-298 the chain carries N6-acetyllysine. Catalysis depends on His-331, which acts as the For beta-ketoacyl synthase activity. The interval 429–817 (RTLEAVQDLL…INVNPNALFP (389 aa)) is acyl and malonyl transferases. Lys-528 is modified (N6-acetyllysine). The active-site For malonyltransferase activity is Ser-581. An acyl-CoA-binding positions include 647-648 (DT) and Phe-671. Lys-673 is subject to N6-acetyllysine. Phosphoserine is present on Ser-725. Arg-773 lines the an acyl-CoA pocket. Residue Lys-790 is modified to N6-acetyllysine. The interval 844–967 (VPVAEDFPNG…VYLWEDPNSK (124 aa)) is N-terminal hotdog fold. The PKS/mFAS DH domain maps to 844–1104 (VPVAEDFPNG…ISRLQTTATS (261 aa)). The Proton acceptor; for dehydratase activity role is filled by His-878. The tract at residues 982-1104 (SVSRLTQGEV…ISRLQTTATS (123 aa)) is C-terminal hotdog fold. Lys-993 carries the N6-acetyllysine modification. Asp-1032 serves as the catalytic Proton donor; for dehydratase activity. Lys-1071 and Lys-1276 each carry N6-acetyllysine. Cys-1464 bears the S-nitrosocysteine mark. 2 positions are modified to phosphoserine: Ser-1577 and Ser-1587. An enoyl reductase region spans residues 1628–1856 (DVPSSWTLEE…VQVREEEPEA (229 aa)). NADP(+) is bound at residue 1664-1681 (VLIHSGSGGVGQAAISIA). Lys-1697 carries the post-translational modification N6-(pyridoxal phosphate)lysine; alternate. Residue Lys-1697 is modified to N6-acetyllysine; alternate. 2 positions are modified to N6-acetyllysine: Lys-1764 and Lys-1840. Residues 1857 to 2111 (VLPGAQPTLI…FVLAEKKAVA (255 aa)) form a beta-ketoacyl reductase region. 1879–1894 (SYIITGGLGGFGLELA) is a binding site for NADP(+). Lys-1988 is subject to N6-acetyllysine. The residue at position 2084 (Cys-2084) is an S-nitrosocysteine. In terms of domain architecture, Carrier spans 2112 to 2192 (HGDGDTQRDL…EMSSKTDSAT (81 aa)). An O-(pantetheine 4'-phosphoryl)serine; alternate modification is found at Ser-2150. Ser-2150 is modified (phosphoserine; alternate). The tract at residues 2181 to 2205 (LQEMSSKTDSATDTTAPKSRSDTSL) is disordered. Residues 2185–2198 (SSKTDSATDTTAPK) show a composition bias toward low complexity. Residues Ser-2190 and Ser-2229 each carry the phosphoserine modification. The interval 2201-2504 (SDTSLKQNQL…AEPRVSVREG (304 aa)) is thioesterase. Ser-2301 serves as the catalytic For thioesterase activity. Position 2384 is an N6-acetyllysine (Lys-2384). Lys-2442 is covalently cross-linked (Glycyl lysine isopeptide (Lys-Gly) (interchain with G-Cter in SUMO2)). Catalysis depends on His-2474, which acts as the For thioesterase activity.

Homodimer which is arranged in a head to tail fashion. Interacts with CEACAM1; this interaction is insulin and phosphorylation-dependent; reduces fatty-acid synthase activity. S-nitrosylation of Fatty acid synthase at cysteine residues Cys-1464 or Cys-2084 is important for the enzyme dimerization. In adipocytes, S-nitrosylation of Fatty acid synthase occurs under physiological conditions and gradually increases during adipogenesis.

It is found in the cytoplasm. The protein localises to the melanosome. The enzyme catalyses acetyl-CoA + n malonyl-CoA + 2n NADPH + 2n H(+) = a long-chain fatty acid + (n+1) CoA + n CO2 + 2n NADP(+).. It catalyses the reaction holo-[ACP] + acetyl-CoA = acetyl-[ACP] + CoA. The catalysed reaction is holo-[ACP] + malonyl-CoA = malonyl-[ACP] + CoA. It carries out the reaction a fatty acyl-[ACP] + malonyl-[ACP] + H(+) = a 3-oxoacyl-[ACP] + holo-[ACP] + CO2. The enzyme catalyses a (3R)-hydroxyacyl-[ACP] + NADP(+) = a 3-oxoacyl-[ACP] + NADPH + H(+). It catalyses the reaction a (3R)-hydroxyacyl-[ACP] = a (2E)-enoyl-[ACP] + H2O. The catalysed reaction is a 2,3-saturated acyl-[ACP] + NADP(+) = a (2E)-enoyl-[ACP] + NADPH + H(+). It carries out the reaction hexadecanoyl-[ACP] + H2O = hexadecanoate + holo-[ACP] + H(+). The enzyme catalyses acetyl-[ACP] + malonyl-[ACP] + H(+) = 3-oxobutanoyl-[ACP] + holo-[ACP] + CO2. It catalyses the reaction 3-oxobutanoyl-[ACP] + NADPH + H(+) = (3R)-hydroxybutanoyl-[ACP] + NADP(+). The catalysed reaction is (3R)-hydroxybutanoyl-[ACP] = (2E)-butenoyl-[ACP] + H2O. It carries out the reaction (2E)-butenoyl-[ACP] + NADPH + H(+) = butanoyl-[ACP] + NADP(+). The enzyme catalyses butanoyl-[ACP] + malonyl-[ACP] + H(+) = 3-oxohexanoyl-[ACP] + holo-[ACP] + CO2. It catalyses the reaction 3-oxohexanoyl-[ACP] + NADPH + H(+) = (3R)-hydroxyhexanoyl-[ACP] + NADP(+). The catalysed reaction is (3R)-hydroxyhexanoyl-[ACP] = (2E)-hexenoyl-[ACP] + H2O. It carries out the reaction (2E)-hexenoyl-[ACP] + NADPH + H(+) = hexanoyl-[ACP] + NADP(+). The enzyme catalyses hexanoyl-[ACP] + malonyl-[ACP] + H(+) = 3-oxooctanoyl-[ACP] + holo-[ACP] + CO2. It catalyses the reaction 3-oxooctanoyl-[ACP] + NADPH + H(+) = (3R)-hydroxyoctanoyl-[ACP] + NADP(+). The catalysed reaction is (3R)-hydroxyoctanoyl-[ACP] = (2E)-octenoyl-[ACP] + H2O. It carries out the reaction (2E)-octenoyl-[ACP] + NADPH + H(+) = octanoyl-[ACP] + NADP(+). The enzyme catalyses octanoyl-[ACP] + malonyl-[ACP] + H(+) = 3-oxodecanoyl-[ACP] + holo-[ACP] + CO2. It catalyses the reaction 3-oxodecanoyl-[ACP] + NADPH + H(+) = (3R)-hydroxydecanoyl-[ACP] + NADP(+). The catalysed reaction is (3R)-hydroxydecanoyl-[ACP] = (2E)-decenoyl-[ACP] + H2O. It carries out the reaction (2E)-decenoyl-[ACP] + NADPH + H(+) = decanoyl-[ACP] + NADP(+). The enzyme catalyses decanoyl-[ACP] + malonyl-[ACP] + H(+) = 3-oxododecanoyl-[ACP] + holo-[ACP] + CO2. It catalyses the reaction 3-oxododecanoyl-[ACP] + NADPH + H(+) = (3R)-hydroxydodecanoyl-[ACP] + NADP(+). The catalysed reaction is (3R)-hydroxydodecanoyl-[ACP] = (2E)-dodecenoyl-[ACP] + H2O. It carries out the reaction (2E)-dodecenoyl-[ACP] + NADPH + H(+) = dodecanoyl-[ACP] + NADP(+). The enzyme catalyses dodecanoyl-[ACP] + malonyl-[ACP] + H(+) = 3-oxotetradecanoyl-[ACP] + holo-[ACP] + CO2. It catalyses the reaction 3-oxotetradecanoyl-[ACP] + NADPH + H(+) = (3R)-hydroxytetradecanoyl-[ACP] + NADP(+). The catalysed reaction is (3R)-hydroxytetradecanoyl-[ACP] = (2E)-tetradecenoyl-[ACP] + H2O. It carries out the reaction (2E)-tetradecenoyl-[ACP] + NADPH + H(+) = tetradecanoyl-[ACP] + NADP(+). The enzyme catalyses tetradecanoyl-[ACP] + malonyl-[ACP] + H(+) = 3-oxohexadecanoyl-[ACP] + holo-[ACP] + CO2. It catalyses the reaction 3-oxohexadecanoyl-[ACP] + NADPH + H(+) = (3R)-hydroxyhexadecanoyl-[ACP] + NADP(+). The catalysed reaction is (3R)-hydroxyhexadecanoyl-[ACP] = (2E)-hexadecenoyl-[ACP] + H2O. It carries out the reaction (2E)-hexadecenoyl-[ACP] + NADPH + H(+) = hexadecanoyl-[ACP] + NADP(+). The enzyme catalyses hexadecanoyl-[ACP] + malonyl-[ACP] + H(+) = 3-oxooctadecanoyl-[ACP] + holo-[ACP] + CO2. It catalyses the reaction 3-oxooctadecanoyl-[ACP] + NADPH + H(+) = (3R)-hydroxyoctadecanoyl-[ACP] + NADP(+). The catalysed reaction is (3R)-hydroxyoctadecanoyl-[ACP] = (2E)-octadecenoyl-[ACP] + H2O. It carries out the reaction (2E)-octadecenoyl-[ACP] + NADPH + H(+) = octadecanoyl-[ACP] + NADP(+). The enzyme catalyses tetradecanoyl-[ACP] + H2O = tetradecanoate + holo-[ACP] + H(+). It functions in the pathway lipid metabolism; fatty acid biosynthesis. Fatty acid synthetase is a multifunctional enzyme that catalyzes the de novo biosynthesis of long-chain saturated fatty acids starting from acetyl-CoA and malonyl-CoA in the presence of NADPH. This multifunctional protein contains 7 catalytic activities and a site for the binding of the prosthetic group 4'-phosphopantetheine of the acyl carrier protein ([ACP]) domain. This is Fatty acid synthase (Fasn) from Mus musculus (Mouse).